A 366-amino-acid polypeptide reads, in one-letter code: uncharacterized protein (366 aa).

Residues 199–267 form a disordered region; the sequence is QKKQIEDEEK…QLKDAQAKRD (69 aa).

This is an uncharacterized protein from Haemophilus influenzae (strain ATCC 51907 / DSM 11121 / KW20 / Rd).